We begin with the raw amino-acid sequence, 268 residues long: Hydroxyethylthiazole kinase (268 aa).

Position 45 (Met45) interacts with substrate. Arg121 and Thr167 together coordinate ATP. Gly194 serves as a coordination point for substrate.

The protein belongs to the Thz kinase family. It depends on Mg(2+) as a cofactor.

It catalyses the reaction 5-(2-hydroxyethyl)-4-methylthiazole + ATP = 4-methyl-5-(2-phosphooxyethyl)-thiazole + ADP + H(+). It functions in the pathway cofactor biosynthesis; thiamine diphosphate biosynthesis; 4-methyl-5-(2-phosphoethyl)-thiazole from 5-(2-hydroxyethyl)-4-methylthiazole: step 1/1. Functionally, catalyzes the phosphorylation of the hydroxyl group of 4-methyl-5-beta-hydroxyethylthiazole (THZ). The chain is Hydroxyethylthiazole kinase from Bacillus thuringiensis (strain Al Hakam).